Here is a 240-residue protein sequence, read N- to C-terminus: Methylthioribulose-1-phosphate dehydratase (240 aa).

Cysteine 103 provides a ligand contact to substrate. Zn(2+) contacts are provided by histidine 121 and histidine 123. Glutamate 144 (proton donor/acceptor) is an active-site residue. Histidine 200 is a Zn(2+) binding site.

The protein belongs to the aldolase class II family. MtnB subfamily. The cofactor is Zn(2+).

Its subcellular location is the cytoplasm. It carries out the reaction 5-(methylsulfanyl)-D-ribulose 1-phosphate = 5-methylsulfanyl-2,3-dioxopentyl phosphate + H2O. It participates in amino-acid biosynthesis; L-methionine biosynthesis via salvage pathway; L-methionine from S-methyl-5-thio-alpha-D-ribose 1-phosphate: step 2/6. Catalyzes the dehydration of methylthioribulose-1-phosphate (MTRu-1-P) into 2,3-diketo-5-methylthiopentyl-1-phosphate (DK-MTP-1-P). This Komagataella phaffii (strain GS115 / ATCC 20864) (Yeast) protein is Methylthioribulose-1-phosphate dehydratase.